Reading from the N-terminus, the 148-residue chain is Deoxyuridine 5'-triphosphate nucleotidohydrolase (148 aa).

Substrate contacts are provided by residues 67-69 (RSG), Asn-80, 84-86 (LID), and Met-94.

This sequence belongs to the dUTPase family. Requires Mg(2+) as cofactor.

It carries out the reaction dUTP + H2O = dUMP + diphosphate + H(+). It functions in the pathway pyrimidine metabolism; dUMP biosynthesis; dUMP from dCTP (dUTP route): step 2/2. Functionally, this enzyme is involved in nucleotide metabolism: it produces dUMP, the immediate precursor of thymidine nucleotides and it decreases the intracellular concentration of dUTP so that uracil cannot be incorporated into DNA. The sequence is that of Deoxyuridine 5'-triphosphate nucleotidohydrolase from Francisella tularensis subsp. holarctica (strain FTNF002-00 / FTA).